The sequence spans 858 residues: Lysine-specific demethylase JMJ706 (858 aa).

The JmjN domain maps to 103–144 (CPVYYPTKEEFEDPIGYIQKIAPVASKYGICKIVSPVSASVP). Positions 250-420 (KSNWNLKNFS…LGSVASRRYA (171 aa)) constitute a JmjC domain. Residues histidine 293, glutamate 295, and histidine 388 each contribute to the Fe cation site. The span at 737-746 (QHNKRPEDYG) shows a compositional bias: basic and acidic residues. 2 disordered regions span residues 737–791 (QHNK…SAKQ) and 829–858 (SSST…WPAI). A compositionally biased stretch (polar residues) spans 829 to 844 (SSSTNRVVEQGSSGQR).

Fe(2+) serves as cofactor.

The protein resides in the nucleus. The enzyme catalyses N(6),N(6),N(6)-trimethyl-L-lysyl(9)-[histone H3] + 2 2-oxoglutarate + 2 O2 = N(6)-methyl-L-lysyl(9)-[histone H3] + 2 formaldehyde + 2 succinate + 2 CO2. Its function is as follows. Histone demethylase that demethylates 'Lys-9' (H3K9me) of histone H3 with a specific activity for H3K9me3 and H3K9me2. No activity on H3K4me3, H3K9me1, H3K27me2 and H3K36me3/2. Involved in the control of floral organ development by demethylating H3K9me3 and H3K9me2 in the promoter regions of DH1 and MADS47. The 'Lys-9' demethylation of these two genes is required for induction of their expression. The protein is Lysine-specific demethylase JMJ706 (JMJ706) of Oryza sativa subsp. japonica (Rice).